The primary structure comprises 113 residues: UPF0342 protein SPy_0811/M5005_Spy0626 (113 aa).

It belongs to the UPF0342 family.

The chain is UPF0342 protein SPy_0811/M5005_Spy0626 from Streptococcus pyogenes serotype M1.